Reading from the N-terminus, the 481-residue chain is Tryptophan 5-hydroxylase (481 aa).

Positions 56-131 constitute an ACT domain; that stretch reads SVIFSLKNEI…NVISMSPPEN (76 aa). The L-tryptophan site is built by Tyr272, Arg294, and Thr302. The Fe cation site is built by His309, His314, and Glu354. L-tryptophan-binding residues include Ser373 and Ile403.

Belongs to the biopterin-dependent aromatic amino acid hydroxylase family. As to quaternary structure, homotetramer. Fe(2+) serves as cofactor.

The catalysed reaction is (6R)-L-erythro-5,6,7,8-tetrahydrobiopterin + L-tryptophan + O2 = 5-hydroxy-L-tryptophan + (4aS,6R)-4a-hydroxy-L-erythro-5,6,7,8-tetrahydrobiopterin. Its pathway is aromatic compound metabolism; serotonin biosynthesis; serotonin from L-tryptophan: step 1/2. Oxidizes L-tryptophan to 5-hydroxy-l-tryptophan in the rate-determining step of serotonin biosynthesis. This is Tryptophan 5-hydroxylase (tph1) from Xenopus laevis (African clawed frog).